The chain runs to 118 residues: MASQSQGIQQLLQAEKRAAEKVADARKRKARRLKQAKEEAQMEVEQYRREREQEFQSKQQAAMGSQGNLSAEVEQATRRQVQGMQSSQQRNRERVLAQLLGMVCDVRPQVHPNYRISA.

The segment at 23-90 (ADARKRKARR…VQGMQSSQQR (68 aa)) is disordered. A compositionally biased stretch (basic and acidic residues) spans 35-55 (QAKEEAQMEVEQYRREREQEF). 2 stretches are compositionally biased toward polar residues: residues 56–69 (QSKQ…QGNL) and 78–89 (RRQVQGMQSSQQ).

This sequence belongs to the V-ATPase G subunit family. V-ATPase is a heteromultimeric enzyme made up of two complexes: the ATP-hydrolytic V1 complex and the proton translocation V0 complex. The V1 complex consists of three catalytic AB heterodimers that form a heterohexamer, three peripheral stalks each consisting of EG heterodimers, one central rotor including subunits D and F, and the regulatory subunits C and H. The proton translocation complex V0 consists of the proton transport subunit a, a ring of proteolipid subunits c9c'', rotary subunit d, subunits e and f, and the accessory subunits ATP6AP1/Ac45 and ATP6AP2/PRR.

Its subcellular location is the melanosome. The protein resides in the cytoplasmic vesicle. The protein localises to the clathrin-coated vesicle membrane. Functionally, subunit of the V1 complex of vacuolar(H+)-ATPase (V-ATPase), a multisubunit enzyme composed of a peripheral complex (V1) that hydrolyzes ATP and a membrane integral complex (V0) that translocates protons. V-ATPase is responsible for acidifying and maintaining the pH of intracellular compartments and in some cell types, is targeted to the plasma membrane, where it is responsible for acidifying the extracellular environment. The polypeptide is V-type proton ATPase subunit G 2 (ATP6V1G2) (Macaca mulatta (Rhesus macaque)).